The primary structure comprises 406 residues: Cysteine desulfurase (406 aa).

An N6-(pyridoxal phosphate)lysine modification is found at K226. C364 functions as the Cysteine persulfide intermediate in the catalytic mechanism.

Belongs to the class-V pyridoxal-phosphate-dependent aminotransferase family. Csd subfamily. As to quaternary structure, homodimer. Interacts with SufE and the SufBCD complex composed of SufB, SufC and SufD. The interaction with SufE is required to mediate the direct transfer of the sulfur atom from the S-sulfanylcysteine. Requires pyridoxal 5'-phosphate as cofactor.

The protein resides in the cytoplasm. It catalyses the reaction (sulfur carrier)-H + L-cysteine = (sulfur carrier)-SH + L-alanine. It carries out the reaction L-selenocysteine + AH2 = hydrogenselenide + L-alanine + A + H(+). It functions in the pathway cofactor biosynthesis; iron-sulfur cluster biosynthesis. Cysteine desulfurases mobilize the sulfur from L-cysteine to yield L-alanine, an essential step in sulfur metabolism for biosynthesis of a variety of sulfur-containing biomolecules. Component of the suf operon, which is activated and required under specific conditions such as oxidative stress and iron limitation. Acts as a potent selenocysteine lyase in vitro, that mobilizes selenium from L-selenocysteine. Selenocysteine lyase activity is however unsure in vivo. The protein is Cysteine desulfurase of Enterobacter sp. (strain 638).